A 275-amino-acid chain; its full sequence is MKIANFEVGNGKPFFLMSGPCVIESEQMAMDTAGYLAEVTRDLGINFVYKSSFDKANRSSINSFRGLGVDKGLEILAKVKKTYNVPVVTDVHEDTPFAEVAEVVDVLQTPAFLCRQTNFILEVCKQGKPVNIKKGQFLAPWDMQHVVTKAKSTGNEQIMVCERGVSFGYNNLVSDMRSLEIMKATGCPVVFDATHSVQLPGGQGSSSGGQREFVPVLSKAAMAVGIDGLFMETHPNPDEAKSDGPNSFPMYKIKEFLSLLKELDHLVKSQPKTEL.

Belongs to the KdsA family.

It localises to the cytoplasm. The catalysed reaction is D-arabinose 5-phosphate + phosphoenolpyruvate + H2O = 3-deoxy-alpha-D-manno-2-octulosonate-8-phosphate + phosphate. Its pathway is carbohydrate biosynthesis; 3-deoxy-D-manno-octulosonate biosynthesis; 3-deoxy-D-manno-octulosonate from D-ribulose 5-phosphate: step 2/3. It participates in bacterial outer membrane biogenesis; lipopolysaccharide biosynthesis. The polypeptide is 2-dehydro-3-deoxyphosphooctonate aldolase (Francisella tularensis subsp. novicida (strain U112)).